Consider the following 389-residue polypeptide: Succinate--CoA ligase [ADP-forming] subunit beta (389 aa).

Residues 9–244 (KQLLAEYGIP…KTQEDETEVT (236 aa)) form the ATP-grasp domain. ATP contacts are provided by residues Lys46, 53 to 55 (GRG), Gly102, and Glu107. Asn199 and Asp213 together coordinate Mg(2+). Substrate-binding positions include Asn264 and 321–323 (GIV).

This sequence belongs to the succinate/malate CoA ligase beta subunit family. Heterotetramer of two alpha and two beta subunits. It depends on Mg(2+) as a cofactor.

The enzyme catalyses succinate + ATP + CoA = succinyl-CoA + ADP + phosphate. The catalysed reaction is GTP + succinate + CoA = succinyl-CoA + GDP + phosphate. The protein operates within carbohydrate metabolism; tricarboxylic acid cycle; succinate from succinyl-CoA (ligase route): step 1/1. Succinyl-CoA synthetase functions in the citric acid cycle (TCA), coupling the hydrolysis of succinyl-CoA to the synthesis of either ATP or GTP and thus represents the only step of substrate-level phosphorylation in the TCA. The beta subunit provides nucleotide specificity of the enzyme and binds the substrate succinate, while the binding sites for coenzyme A and phosphate are found in the alpha subunit. The protein is Succinate--CoA ligase [ADP-forming] subunit beta of Xanthomonas oryzae pv. oryzae (strain MAFF 311018).